Reading from the N-terminus, the 677-residue chain is Transketolase 1 (677 aa).

H27 serves as a coordination point for substrate. Thiamine diphosphate-binding positions include H66 and 114–116; that span reads GPL. D155 is a Mg(2+) binding site. The thiamine diphosphate site is built by G156 and N185. Mg(2+)-binding residues include N185 and I187. Substrate-binding residues include H261, R356, and S383. Thiamine diphosphate is bound at residue H261. Residues E415 and F442 each coordinate thiamine diphosphate. E415 serves as the catalytic Proton donor. The substrate site is built by H466, D474, and R525.

Belongs to the transketolase family. Homodimer. Requires Mg(2+) as cofactor. It depends on Ca(2+) as a cofactor. Mn(2+) serves as cofactor. The cofactor is Co(2+). Thiamine diphosphate is required as a cofactor.

The catalysed reaction is D-sedoheptulose 7-phosphate + D-glyceraldehyde 3-phosphate = aldehydo-D-ribose 5-phosphate + D-xylulose 5-phosphate. Catalyzes the transfer of a two-carbon ketol group from a ketose donor to an aldose acceptor, via a covalent intermediate with the cofactor thiamine pyrophosphate. In Candida albicans (Yeast), this protein is Transketolase 1 (TKT1).